The sequence spans 340 residues: NADPH dehydrogenase (340 aa).

23–26 lines the FMN pocket; that stretch reads SPMC. Tyr-28 contacts substrate. Ala-60 and Gln-102 together coordinate FMN. 164–167 contacts substrate; the sequence is HAAH. FMN-binding positions include Arg-215 and 307 to 308; that span reads GR.

Belongs to the NADH:flavin oxidoreductase/NADH oxidase family. NamA subfamily. Homotetramer. It depends on FMN as a cofactor.

It carries out the reaction A + NADPH + H(+) = AH2 + NADP(+). Functionally, catalyzes the reduction of the double bond of an array of alpha,beta-unsaturated aldehydes and ketones. It also reduces the nitro group of nitroester and nitroaromatic compounds. It could have a role in detoxification processes. The protein is NADPH dehydrogenase of Geobacillus thermodenitrificans (strain NG80-2).